The sequence spans 55 residues: Large ribosomal subunit protein bL33 (55 aa).

The protein belongs to the bacterial ribosomal protein bL33 family.

The chain is Large ribosomal subunit protein bL33 from Bradyrhizobium diazoefficiens (strain JCM 10833 / BCRC 13528 / IAM 13628 / NBRC 14792 / USDA 110).